The following is a 1278-amino-acid chain: Sterol regulatory element-binding protein cleavage-activating protein (1278 aa).

Over 1–18 (MTLTERLREKISQAFYNH) the chain is Cytoplasmic. Residues 19–39 (GLFCASYPIPIILFTGLCILA) traverse the membrane as a helical segment. Topologically, residues 40–279 (CCYPLLKLPL…SLVHVHFKEE (240 aa)) are lumenal. The segment at 46–284 (KLPLPGTGPV…HFKEEIGIAE (239 aa)) is loop-1. The tract at residues 60–80 (PVKDYSPPPLTSDHKPGEPNE) is disordered. Asn263 carries N-linked (GlcNAc...) asparagine glycosylation. The helical transmembrane segment at 280–300 (IGIAELIPLVTTYIILFAYIY) threads the bilayer. An SSD domain is found at 284-442 (ELIPLVTTYI…MLFFTTVLSI (159 aa)). Residues 301 to 312 (FSTRKIDMVKSK) are Cytoplasmic-facing. A helical transmembrane segment spans residues 313 to 333 (WGLALAAVVTVLSSLLMSVGL). At 334–344 (CTLFGLTPTLN) the chain is on the lumenal side. A helical membrane pass occupies residues 345–365 (GGEIFPYLVVVIGLENVLVLT). Topologically, residues 366-401 (KSVVSTPVDLEVKLRIAQGLSSESWSIMKNMATELG) are cytoplasmic. Residues 402–422 (IVLIGYFTLVPAIQEFCLFAV) form a helical membrane-spanning segment. Residue Val423 is a topological domain, lumenal. A helical membrane pass occupies residues 424–444 (GLVSDFFLQMLFFTTVLSIDI). Topologically, residues 445–518 (RRMELADLNK…FLARTRLAQR (74 aa)) are cytoplasmic. The ER export signal motif lies at 447-452 (MELADL). Residues Lys454 and Lys466 each participate in a glycyl lysine isopeptide (Lys-Gly) (interchain with G-Cter in ubiquitin) cross-link. A helical transmembrane segment spans residues 519-539 (LIMAGTVVWIGILVYTDPAGL). Positions 535–710 (DPAGLRTYLA…QAQRDLTLYK (176 aa)) are loop-7. Residues 540-707 (RTYLAAQVTE…GTAQAQRDLT (168 aa)) lie on the Lumenal side of the membrane. Residues 581-618 (PPDASKLPENQTLPGEPPEPGGLAEGVHDSPAPEVTWG) form a disordered region. Asn590 and Asn641 each carry an N-linked (GlcNAc...) asparagine glycan. The segment at 668–696 (EGRHPQDGRSAWPPPRPGQGGLWEAGPKG) is disordered. A helical membrane pass occupies residues 708-728 (LYKVAALGLASGIVLVLLLLC). The Cytoplasmic segment spans residues 729-1278 (LYRVLCPRNY…YVPSVLEKLD (550 aa)). Residues 731 to 1278 (RVLCPRNYGQ…YVPSVLEKLD (548 aa)) are interaction with SREBF2. One copy of the WD 1 repeat lies at 771-811 (VLRGHLMDIECLASDGMLLVSCCLAGHVCVWDAQTGDCLTR). A phosphoserine mark is found at Ser821, Ser837, Ser850, Ser905, and Ser935. Residues 834–904 (ERLSDGGKGG…RYRAGRRAQD (71 aa)) are disordered. WD repeat units lie at residues 951-1001 (PPEK…LRCS) and 1004-1041 (EVSSGITALVFLDRRIVAARLNGSLDFFSLETHTALSP). Arg1050 carries the omega-N-methylarginine modification. WD repeat units lie at residues 1076–1113 (AHQKPITALKAAAGRLVTGSQDHTLRVFRLEDSCCLFT), 1116–1154 (GHSGAITTVYIDQTMVLASGGQDGAICLWDVLTGSRVSH), 1157–1194 (AHRGDVTSLTCTTSCVISSGLDDLISIWDRSTGIKLYS), and 1196–1234 (QQDLGCGASLGVISDNLLVTGGQGCVSFWDLNYGDLLQT).

It belongs to the WD repeat SCAP family. As to quaternary structure, membrane region forms a homotetramer. Component of the SCAP-SREBP complex (composed of SCAP and SREBF1/SREBP1 or SREBF2/SREBP2); interacts with SREBF1/SREBP1 or SREBF2/SREBP2 through its C-terminal cytoplasmic domain. Forms a ternary complex with INSIG1 or INSIG2 through its transmembrane domains at high sterol concentrations. Interacts with PAQR3; the interaction anchors the SCAP-SREBP complex to the Golgi apparatus in low cholesterol conditions. Interacts with the SEC23-SEC24 complex in a SAR1-GTP-dependent manner through an ER export signal in its third cytoplasmic loop. Interacts with RNF139; the interaction inhibits the interaction of SCAP with SEC24B and hampering the ER to Golgi transport of the SCAP-SREBP complex. Interacts with SPRING1. Ubiquitinated at Lys-454 and Lys-466. RNF145 triggers ubiquitination of SCAP, likely inhibiting SCAP-SREBP complex transport to the Golgi apparatus and the subsequent processing/maturation of SREBF2/SREBP2.

The protein localises to the endoplasmic reticulum membrane. The protein resides in the golgi apparatus membrane. Its subcellular location is the cytoplasmic vesicle. It localises to the COPII-coated vesicle membrane. Functionally, escort protein required for cholesterol as well as lipid homeostasis. Regulates export of the SCAP-SREBP complex from the endoplasmic reticulum to the Golgi upon low cholesterol, thereby regulating the processing of sterol regulatory element-binding proteins (SREBPs) SREBF1/SREBP1 and SREBF2/SREBP2. At high sterol concentrations, formation of a ternary complex with INSIG (INSIG1 or INSIG2) leads to mask the ER export signal in SCAP, promoting retention of the complex in the endoplasmic reticulum. Low sterol concentrations trigger release of INSIG, a conformational change in the SSD domain of SCAP, unmasking of the ER export signal, promoting recruitment into COPII-coated vesicles and transport of the SCAP-SREBP to the Golgi: in the Golgi, SREBPs are then processed, releasing the transcription factor fragment of SREBPs from the membrane, its import into the nucleus and up-regulation of LDLR, INSIG1 and the mevalonate pathway. Binds cholesterol via its SSD domain. The sequence is that of Sterol regulatory element-binding protein cleavage-activating protein from Bos taurus (Bovine).